The sequence spans 835 residues: MGILNKIFGTYSERELRRVNPIVNKIEALDEKMQSLKDEDFKLKTEEFKSRLEKGEKLDDILPEAFALVREASHRTIGLKHYREQLIGGVVLHQGRIGEMKTGEGKTLVATLPAYVNALTGKGVHIVTVNDYLAKRDRDLMAPVYEFLGLKVGVILHNLNNEERQEAYGSDITYGTNSEFGFDYLRDNMVVYKEERVQRKLNFSIVDEVDSILIDEARTPLIISGQGEKSTEFYKVADYFTKSLIAEKDFTIDEKANSAMLTDEGVNKAENFFKVDNYADAENMEIQHHVVQALKANYVMKKDKDYMIKDGEILIVDEFTGRAMEGRRYSDGLHQAIEAKEGVRVERESKTLATITYQNYFRMYNKLSGMTGTAQTEENEFREIYGLDVIVIPTHEPIARIDNADVVYKSEKGKFKAIVDEIVERYKKGQPMLVGTVSIEKSEMLSSMLKKKGVPHQVLNAKYHEKEAEIISHAGEYGMVTIATNMAGRGTDIKLTKEAEEAGGLMIIGTERHESRRIDNQLRGRSGRQGDPGESRFFVSLEDDLMRIFGSERIQGIVDKLGLAEDEAIESKMVSSAIESAQKKVEGNNFDIRKTLLQYDDVINKQREIIYKQRSEVLEGEDLKDQIRDMIRDVAYTAVNSHVSGVEEEFETELQNLVNYLEDICLPKALVKVKDISNLSDEEIKEKLLEAVENIYSNKEKEIGEEQIREIERVILLRVVDTKWMDHIDDMDHLKQGIGLRAYRQQDPVQAYQFEGSEMFEEMIYNIKVDTVRYLFHVEVEKAPEREKVAKETSTNYDEDSVKKQPIKKENRIGRNDMCPCGSGKKYKNCCGRMA.

ATP contacts are provided by residues Gln85, 103–107, and Asp492; that span reads GEGKT. 4 residues coordinate Zn(2+): Cys819, Cys821, Cys830, and Cys831.

It belongs to the SecA family. In terms of assembly, monomer and homodimer. Part of the essential Sec protein translocation apparatus which comprises SecA, SecYEG and auxiliary proteins SecDF. Other proteins may also be involved. The cofactor is Zn(2+).

The protein resides in the cell membrane. Its subcellular location is the cytoplasm. It catalyses the reaction ATP + H2O + cellular proteinSide 1 = ADP + phosphate + cellular proteinSide 2.. Part of the Sec protein translocase complex. Interacts with the SecYEG preprotein conducting channel. Has a central role in coupling the hydrolysis of ATP to the transfer of proteins into and across the cell membrane, serving as an ATP-driven molecular motor driving the stepwise translocation of polypeptide chains across the membrane. This Clostridium botulinum (strain Loch Maree / Type A3) protein is Protein translocase subunit SecA.